The primary structure comprises 258 residues: Imidazole glycerol phosphate synthase subunit HisF (258 aa).

Catalysis depends on residues Asp-11 and Asp-130.

The protein belongs to the HisA/HisF family. Heterodimer of HisH and HisF.

It localises to the cytoplasm. The enzyme catalyses 5-[(5-phospho-1-deoxy-D-ribulos-1-ylimino)methylamino]-1-(5-phospho-beta-D-ribosyl)imidazole-4-carboxamide + L-glutamine = D-erythro-1-(imidazol-4-yl)glycerol 3-phosphate + 5-amino-1-(5-phospho-beta-D-ribosyl)imidazole-4-carboxamide + L-glutamate + H(+). It functions in the pathway amino-acid biosynthesis; L-histidine biosynthesis; L-histidine from 5-phospho-alpha-D-ribose 1-diphosphate: step 5/9. IGPS catalyzes the conversion of PRFAR and glutamine to IGP, AICAR and glutamate. The HisF subunit catalyzes the cyclization activity that produces IGP and AICAR from PRFAR using the ammonia provided by the HisH subunit. The sequence is that of Imidazole glycerol phosphate synthase subunit HisF from Shigella sonnei (strain Ss046).